The primary structure comprises 578 residues: Penicillin-binding protein activator LpoA (578 aa).

Positions 1-30 are cleaved as a signal peptide; the sequence is MPTILVQSYGFRQKMKTIFIPTALALLLAA. Residue Cys-31 is the site of N-palmitoyl cysteine attachment. The S-diacylglycerol cysteine moiety is linked to residue Cys-31.

Belongs to the LpoA family. In terms of assembly, interacts with PBP1a.

The protein resides in the cell outer membrane. Functionally, regulator of peptidoglycan synthesis that is essential for the function of penicillin-binding protein 1A (PBP1a). The chain is Penicillin-binding protein activator LpoA from Glaesserella parasuis serovar 5 (strain SH0165) (Haemophilus parasuis).